Reading from the N-terminus, the 68-residue chain is uncharacterized protein (68 aa).

Residues 1–68 form a disordered region; it reads METIIRRFSP…GNSKNIKTKK (68 aa). Residues 9-34 are compositionally biased toward basic and acidic residues; that stretch reads SPKEKEKEKEKEEKDEKSKDKKEPIK. Over residues 42–51 the composition is skewed to acidic residues; sequence DEEEEEDEQE.

This is an uncharacterized protein from Dictyostelium discoideum (Social amoeba).